Reading from the N-terminus, the 273-residue chain is Putative phosphoenolpyruvate synthase regulatory protein (273 aa).

153-160 (GVSRCGKT) is an ADP binding site.

The protein belongs to the pyruvate, phosphate/water dikinase regulatory protein family. PSRP subfamily.

The catalysed reaction is [pyruvate, water dikinase] + ADP = [pyruvate, water dikinase]-phosphate + AMP + H(+). It carries out the reaction [pyruvate, water dikinase]-phosphate + phosphate + H(+) = [pyruvate, water dikinase] + diphosphate. Its function is as follows. Bifunctional serine/threonine kinase and phosphorylase involved in the regulation of the phosphoenolpyruvate synthase (PEPS) by catalyzing its phosphorylation/dephosphorylation. This is Putative phosphoenolpyruvate synthase regulatory protein from Sodalis glossinidius (strain morsitans).